The following is a 147-amino-acid chain: Large ribosomal subunit protein uL15 (147 aa).

The tract at residues 1–65 (MQLHELKPAP…PLQRRLPKRG (65 aa)) is disordered. Gly residues-rich tracts occupy residues 21-31 (QGIGSGLGKTA) and 42-52 (SGGGVRPGFEG).

This sequence belongs to the universal ribosomal protein uL15 family. Part of the 50S ribosomal subunit.

Binds to the 23S rRNA. This Heliobacterium modesticaldum (strain ATCC 51547 / Ice1) protein is Large ribosomal subunit protein uL15.